We begin with the raw amino-acid sequence, 730 residues long: Arginine decarboxylase 1B, chloroplastic (730 aa).

The N-terminal 37 residues, 1–37 (MPALGCCVDAAVSPPPGYSFLWDSSLPAPEIFPSGVP), are a transit peptide targeting the chloroplast. K157 is subject to N6-(pyridoxal phosphate)lysine. Pyridoxal 5'-phosphate is bound by residues S309, G346, and 395–398 (ESGR). 460-461 (YA) contacts substrate. C548 serves as the catalytic Proton donor; shared with dimeric partner. A substrate-binding site is contributed by D549. Pyridoxal 5'-phosphate is bound at residue Y590.

This sequence belongs to the Orn/Lys/Arg decarboxylase class-II family. SpeA subfamily. It depends on Mg(2+) as a cofactor. Pyridoxal 5'-phosphate is required as a cofactor.

The protein resides in the plastid. It is found in the chloroplast. The catalysed reaction is L-arginine + H(+) = agmatine + CO2. The protein operates within alkaloid biosynthesis; nicotine biosynthesis. It functions in the pathway amine and polyamine biosynthesis; agmatine biosynthesis; agmatine from L-arginine: step 1/1. Functionally, involved in the biosynthesis of pyridine alkaloid natural products, leading mainly to the production of anabasine, anatabine, nicotine and nornicotine, effective deterrents against herbivores with antiparasitic and pesticide properties (neurotoxins); nornicotine serves as the precursor in the synthesis of the carcinogen compound N'-nitrosonornicotine (NNN). Required for the biosynthesis of putrescine. Catalyzes the first step of polyamine (PA) biosynthesis to produce putrescine from arginine. The protein is Arginine decarboxylase 1B, chloroplastic of Nicotiana tabacum (Common tobacco).